A 341-amino-acid chain; its full sequence is MFRLDELAARLGGDVVGDPATTVRRVATLEQAGEGDLSFLANPKYVGRLKSSHASAIIVADSARSLLGEKAGIVTRDPYLYFARVAQLFNPPEAVAPGVHPLADVAVAVPASVAVAAGASIGAGVELGEDVVIGAGSSIGAGVRIGAGTRLAPRVVIYPGCVIGTNCLIHAGAVIGSDGFGFAREKSGAWVKIPQVGRVVIGDDVEIGANTTIDRGALDDTVIGNGVKIDNQIQIGHNVRIGDYTAIAGCVGIAGSTQIGARCMIGGQAGIIGHLTIADDVVISAGTLVTKSIHKPGVYTANLPVQPHADWVKNFAHLRHLDSLAARIRALEQSPDHPESA.

Histidine 237 acts as the Proton acceptor in catalysis.

The protein belongs to the transferase hexapeptide repeat family. LpxD subfamily. Homotrimer.

The catalysed reaction is a UDP-3-O-[(3R)-3-hydroxyacyl]-alpha-D-glucosamine + a (3R)-hydroxyacyl-[ACP] = a UDP-2-N,3-O-bis[(3R)-3-hydroxyacyl]-alpha-D-glucosamine + holo-[ACP] + H(+). Its pathway is bacterial outer membrane biogenesis; LPS lipid A biosynthesis. Functionally, catalyzes the N-acylation of UDP-3-O-acylglucosamine using 3-hydroxyacyl-ACP as the acyl donor. Is involved in the biosynthesis of lipid A, a phosphorylated glycolipid that anchors the lipopolysaccharide to the outer membrane of the cell. The sequence is that of UDP-3-O-acylglucosamine N-acyltransferase from Azoarcus sp. (strain BH72).